A 189-amino-acid chain; its full sequence is Ras-like protein rasG (189 aa).

GTP is bound at residue 10–17 (GGGGVGKS). The Effector region motif lies at 32-40 (YDPTIEDSY). GTP is bound by residues 57-61 (DTAGQ) and 116-119 (NKCD). The segment at 169 to 189 (KGDSKPEKGKKKRPLKACTLL) is disordered. Cysteine methyl ester is present on Cys186. Cys186 is lipidated: S-geranylgeranyl cysteine. Residues 187 to 189 (TLL) constitute a propeptide, removed in mature form.

Belongs to the small GTPase superfamily. Ras family. Interacts with ripA.

It localises to the cell membrane. The enzyme catalyses GTP + H2O = GDP + phosphate + H(+). Its activity is regulated as follows. Alternates between an inactive form bound to GDP and an active form bound to GTP. Activated by a guanine nucleotide-exchange factor (GEF) and inactivated by a GTPase-activating protein (GAP). Its function is as follows. Ras proteins bind GDP/GTP and possess intrinsic GTPase activity. This is Ras-like protein rasG (rasG) from Dictyostelium discoideum (Social amoeba).